The primary structure comprises 259 residues: 5'-nucleotidase SurE (259 aa).

A divalent metal cation-binding residues include Asp8, Asp9, Ser39, and Asn95.

This sequence belongs to the SurE nucleotidase family. Requires a divalent metal cation as cofactor.

It localises to the cytoplasm. It carries out the reaction a ribonucleoside 5'-phosphate + H2O = a ribonucleoside + phosphate. In terms of biological role, nucleotidase that shows phosphatase activity on nucleoside 5'-monophosphates. The protein is 5'-nucleotidase SurE of Pseudothermotoga lettingae (strain ATCC BAA-301 / DSM 14385 / NBRC 107922 / TMO) (Thermotoga lettingae).